Here is a 134-residue protein sequence, read N- to C-terminus: Small ribosomal subunit protein bS16 (134 aa).

The interval 80–134 (GLAKRPTRSNPTKGEPGKKAQERLAMAKQAEEEAAAKAAEAAAAAAAPAEEAASE) is disordered. Residues 115–134 (AKAAEAAAAAAAPAEEAASE) are compositionally biased toward low complexity.

The protein belongs to the bacterial ribosomal protein bS16 family.

This Brucella anthropi (strain ATCC 49188 / DSM 6882 / CCUG 24695 / JCM 21032 / LMG 3331 / NBRC 15819 / NCTC 12168 / Alc 37) (Ochrobactrum anthropi) protein is Small ribosomal subunit protein bS16.